The chain runs to 571 residues: Phosphatidylinositol-3,5-bisphosphate 3-phosphatase MTMR2 (571 aa).

The region spanning M1–G67 is the GRAM domain. Residues G133–Y508 form the Myotubularin phosphatase domain. A 1,2-diacyl-sn-glycero-3-phospho-(1D-myo-inositol-3,5-bisphosphate) contacts are provided by N258, N283, and I284. Residues N258, N283, and I284 each coordinate a 1,2-diacyl-sn-glycero-3-phospho-(1D-myo-inositol-3-phosphate). Residue C345 is the Phosphocysteine intermediate of the active site. A 1,2-diacyl-sn-glycero-3-phospho-(1D-myo-inositol-3,5-bisphosphate)-binding residues include S346, D347, G348, W349, D350, R351, R387, and R391. Positions 346, 347, 348, 349, 350, and 351 each coordinate a 1,2-diacyl-sn-glycero-3-phospho-(1D-myo-inositol-3-phosphate). Residue R391 participates in a 1,2-diacyl-sn-glycero-3-phospho-(1D-myo-inositol-3-phosphate) binding. Residues V521–S553 are a coiled coil. Positions R544–V571 are disordered.

This sequence belongs to the protein-tyrosine phosphatase family. Non-receptor class myotubularin subfamily. As to quaternary structure, homooligomer and heterooligomer.

The protein resides in the cytoplasm. The protein localises to the early endosome membrane. The catalysed reaction is a 1,2-diacyl-sn-glycero-3-phospho-(1D-myo-inositol-3,5-bisphosphate) + H2O = a 1,2-diacyl-sn-glycero-3-phospho-(1D-myo-inositol-5-phosphate) + phosphate. It catalyses the reaction a 1,2-diacyl-sn-glycero-3-phospho-(1D-myo-inositol-3-phosphate) + H2O = a 1,2-diacyl-sn-glycero-3-phospho-(1D-myo-inositol) + phosphate. It carries out the reaction 1,2-dioctanoyl-sn-glycero-3-phospho-(1-D-myo-inositol-3-phosphate) + H2O = 1,2-dioctanoyl-sn-glycero-3-phospho-(1D-myo-inositol) + phosphate. The enzyme catalyses 1,2-dioctanoyl-sn-glycero-3-phospho-(1D-myo-inositol-3,5-bisphosphate) + H2O = 1,2-dioctanoyl-sn-glycero-3-phospho-(1D-myo-inositol-5-phosphate) + phosphate. In terms of biological role, lipid phosphatase that specifically dephosphorylates the D-3 position of phosphatidylinositol 3-phosphate and phosphatidylinositol 3,5-bisphosphate, generating phosphatidylinositol and phosphatidylinositol 5-phosphate. Regulates the level of these phosphoinositides critical for various biological processes including autophagy initiation and autophagosome maturation. The sequence is that of Phosphatidylinositol-3,5-bisphosphate 3-phosphatase MTMR2 from Gallus gallus (Chicken).